The sequence spans 436 residues: Repulsive guidance molecule B (436 aa).

An N-terminal signal peptide occupies residues 1-48; sequence MGVRAAPSCAAAPAAAGAEQSRRPGLWPPSPPPPLLLLLLLSLGLLHA. A glycan (N-linked (GlcNAc...) asparagine) is linked at N123. Cystine bridges form between C142/C229 and C166/C315. N386 carries an N-linked (GlcNAc...) asparagine glycan. A lipid anchor (GPI-anchor amidated cysteine) is attached at C415. The propeptide at 416 to 436 is removed in mature form; that stretch reads GGCRDLPVGLGLTCLILIMFL.

The protein belongs to the repulsive guidance molecule (RGM) family. In terms of assembly, homooligomer. Interacts with DRGX. Interacts with BMP2 and BMP4. Interacts with the BMP type I receptors ACVR1, BMPR1A and BMPR1B and with the BMP type II receptor ACVR2B. The functional complex with its receptor NEO1/neogenin appears to be a heterotetramer with a 2:2 stoichiometry, RGM molecules acting as staples that bring two NEO1 receptors together without interacting themselves, this arrangement leads to activation of downstream signaling via RhoA. GPI-anchored. Post-translationally, autocatalytically cleaved at low pH; the two chains remain linked via two disulfide bonds. In terms of tissue distribution, detected in neonatal and adult dorsal root ganglion sensory neurons, spinal cord, and brain (at protein level). Also expressed at high levels in retinal ganglion cells of developing mouse, extending to the optic nerve (at protein level). Expressed in testis, epididymis, ovary, uterus, and pituitary.

The protein localises to the cell membrane. It is found in the membrane raft. Functionally, member of the repulsive guidance molecule (RGM) family that contributes to the patterning of the developing nervous system. Acts as a bone morphogenetic protein (BMP) coreceptor that potentiates BMP signaling. Promotes neuronal adhesion. May inhibit neurite outgrowth. This is Repulsive guidance molecule B from Mus musculus (Mouse).